Reading from the N-terminus, the 182-residue chain is Troponin I, fast skeletal muscle (182 aa).

G2 carries the post-translational modification N-acetylglycine. Positions 2–48 (GDEEKRNRAITARRQHLKSVMLQIAATELEKEEGRREAEKQNYLAEH) are involved in binding TNC. Position 12 is a phosphothreonine; by PHK (T12). Residues 97–117 (NQKLFDLRGKFKRPPLRRVRM) form an involved in binding TNC and actin region. Residue S118 is modified to Phosphoserine; by PKA.

This sequence belongs to the troponin I family. In terms of assembly, binds to actin and tropomyosin.

Troponin I is the inhibitory subunit of troponin, the thin filament regulatory complex which confers calcium-sensitivity to striated muscle actomyosin ATPase activity. This Oryctolagus cuniculus (Rabbit) protein is Troponin I, fast skeletal muscle (TNNI2).